The sequence spans 581 residues: MDTIKSFKGYGKVNELEQQAYEKKTRKRLIIIAVSSIVLIAVIIAAVAGVVIHNRNSESSPSSDSVPQTELSPAASLKAVCDTTRYPSSCFSSISSLPESNTTDPELLFKLSLRVAIDELSSFPSKLRANAEQDARLQKAIDVCSSVFGDALDRLNDSISALGTVAGRIASSASVSNVETWLSAALTDQDTCLDAVGELNSTAARGALQEIETAMRNSTEFASNSLAIVTKILGLLSRFETPIHHRRLLGFPEWLGAAERRLLEEKNNDSTPDAVVAKDGSGQFKTIGEALKLVKKKSEERFSVYVKEGRYVENIDLDKNTWNVMIYGDGKDKTFVVGSRNFMDGTPTFETATFAVKGKGFIAKDIGFVNNAGASKHQAVALRSGSDRSVFFRCSFDGFQDTLYAHSNRQFYRDCDITGTIDFIFGNAAVVFQSCKIMPRQPLPNQFNTITAQGKKDPNQNTGIIIQKSTITPFGNNLTAPTYLGRPWKDFSTTVIMQSDIGALLNPVGWMSWVPNVEPPTTIFYAEYQNSGPGADVSQRVKWAGYKPTITDRNAEEFTVQSFIQGPEWLPNAAVQFDSTL.

The signal sequence occupies residues 1-55; the sequence is MDTIKSFKGYGKVNELEQQAYEKKTRKRLIIIAVSSIVLIAVIIAAVAGVVIHNR. Residues Asn-101, Asn-156, Asn-200, Asn-217, and Asn-268 are each glycosylated (N-linked (GlcNAc...) asparagine). Residues Thr-348 and Gln-378 each contribute to the substrate site. Residue Asp-401 is the Proton donor of the active site. Cysteines 415 and 435 form a disulfide. The Nucleophile role is filled by Asp-422. A glycan (N-linked (GlcNAc...) asparagine) is linked at Asn-477. Residues Arg-486 and Trp-488 each contribute to the substrate site.

This sequence in the N-terminal section; belongs to the PMEI family. The protein in the C-terminal section; belongs to the pectinesterase family.

It is found in the secreted. The protein localises to the cell wall. It catalyses the reaction [(1-&gt;4)-alpha-D-galacturonosyl methyl ester](n) + n H2O = [(1-&gt;4)-alpha-D-galacturonosyl](n) + n methanol + n H(+). Its pathway is glycan metabolism; pectin degradation; 2-dehydro-3-deoxy-D-gluconate from pectin: step 1/5. In terms of biological role, may have roles in the deposition of pectin in developing tissues and in the wall loosening and cell separation that occurs in cell expansion, fruit ripening and abscission. This chain is Pectinesterase 3 (MPE3), found in Phaseolus vulgaris (Kidney bean).